We begin with the raw amino-acid sequence, 343 residues long: Adenosine kinase (343 aa).

Residue Asp-296 is part of the active site.

The protein belongs to the carbohydrate kinase PfkB family. Mg(2+) is required as a cofactor.

It carries out the reaction adenosine + ATP = AMP + ADP + H(+). It functions in the pathway purine metabolism; AMP biosynthesis via salvage pathway; AMP from adenosine: step 1/1. Functionally, ATP dependent phosphorylation of adenosine and other related nucleoside analogs to monophosphate derivatives. Can also act on the cytokinin isopentenyladenosine to produce isopentenyladenosine monophosphate. In Physcomitrium patens (Spreading-leaved earth moss), this protein is Adenosine kinase (ADK).